The following is a 241-amino-acid chain: Aspartate/glutamate leucyltransferase (241 aa).

This sequence belongs to the R-transferase family. Bpt subfamily.

Its subcellular location is the cytoplasm. The enzyme catalyses N-terminal L-glutamyl-[protein] + L-leucyl-tRNA(Leu) = N-terminal L-leucyl-L-glutamyl-[protein] + tRNA(Leu) + H(+). The catalysed reaction is N-terminal L-aspartyl-[protein] + L-leucyl-tRNA(Leu) = N-terminal L-leucyl-L-aspartyl-[protein] + tRNA(Leu) + H(+). Functions in the N-end rule pathway of protein degradation where it conjugates Leu from its aminoacyl-tRNA to the N-termini of proteins containing an N-terminal aspartate or glutamate. This chain is Aspartate/glutamate leucyltransferase, found in Parvibaculum lavamentivorans (strain DS-1 / DSM 13023 / NCIMB 13966).